The sequence spans 158 residues: Anaerobic ribonucleoside-triphosphate reductase-activating protein (158 aa).

3 residues coordinate [4Fe-4S] cluster: cysteine 26, cysteine 30, and cysteine 33. Residues 32–34 (GCY) and glycine 74 each bind S-adenosyl-L-methionine.

Belongs to the organic radical-activating enzymes family. As to quaternary structure, forms a tetramer composed of two NrdD and two NrdG subunits. The cofactor is [4Fe-4S] cluster.

The protein localises to the cytoplasm. It catalyses the reaction glycyl-[protein] + reduced [flavodoxin] + S-adenosyl-L-methionine = glycin-2-yl radical-[protein] + semiquinone [flavodoxin] + 5'-deoxyadenosine + L-methionine + H(+). Activation of anaerobic ribonucleoside-triphosphate reductase under anaerobic conditions by generation of an organic free radical, using S-adenosylmethionine and reduced flavodoxin as cosubstrates to produce 5'-deoxy-adenosine. This is Anaerobic ribonucleoside-triphosphate reductase-activating protein (nrdG) from Pasteurella multocida (strain Pm70).